Consider the following 1102-residue polypeptide: Carbamoyl phosphate synthase large chain (1102 aa).

The tract at residues 1–402 is carboxyphosphate synthetic domain; that stretch reads MPKRTDLKSV…ALQKALRSLE (402 aa). 12 residues coordinate ATP: R129, R169, G175, G176, E208, I210, E215, G241, V242, H243, Q285, and E299. The region spanning 133 to 328 is the ATP-grasp 1 domain; it reads KGVVERCGAE…IAKIATKLSL (196 aa). Residues Q285, E299, and N301 each contribute to the Mg(2+) site. 3 residues coordinate Mn(2+): Q285, E299, and N301. Residues 403-546 are oligomerization domain; sequence QKGSQLDFSS…YHYSSYDEED (144 aa). Residues 547–950 form a carbamoyl phosphate synthetic domain region; sequence EVGLHAKPSV…AFAKSQAAAN (404 aa). One can recognise an ATP-grasp 2 domain in the interval 677 to 868; that stretch reads ARVLDEAGLT…MAKAAALIGT (192 aa). ATP contacts are provided by R713, R752, L754, E759, G784, I785, H786, S787, Q827, and E839. Positions 827, 839, and 841 each coordinate Mg(2+). Mn(2+)-binding residues include Q827, E839, and N841. Residues 951–1096 enclose the MGS-like domain; sequence NALPTEGKIF…QEHAANLSAA (146 aa). The segment at 951–1102 is allosteric domain; it reads NALPTEGKIF…LSAAMEAANA (152 aa).

Belongs to the CarB family. In terms of assembly, composed of two chains; the small (or glutamine) chain promotes the hydrolysis of glutamine to ammonia, which is used by the large (or ammonia) chain to synthesize carbamoyl phosphate. Tetramer of heterodimers (alpha,beta)4. The cofactor is Mg(2+). Mn(2+) serves as cofactor.

The catalysed reaction is hydrogencarbonate + L-glutamine + 2 ATP + H2O = carbamoyl phosphate + L-glutamate + 2 ADP + phosphate + 2 H(+). It catalyses the reaction hydrogencarbonate + NH4(+) + 2 ATP = carbamoyl phosphate + 2 ADP + phosphate + 2 H(+). It functions in the pathway amino-acid biosynthesis; L-arginine biosynthesis; carbamoyl phosphate from bicarbonate: step 1/1. Its pathway is pyrimidine metabolism; UMP biosynthesis via de novo pathway; (S)-dihydroorotate from bicarbonate: step 1/3. Large subunit of the glutamine-dependent carbamoyl phosphate synthetase (CPSase). CPSase catalyzes the formation of carbamoyl phosphate from the ammonia moiety of glutamine, carbonate, and phosphate donated by ATP, constituting the first step of 2 biosynthetic pathways, one leading to arginine and/or urea and the other to pyrimidine nucleotides. The large subunit (synthetase) binds the substrates ammonia (free or transferred from glutamine from the small subunit), hydrogencarbonate and ATP and carries out an ATP-coupled ligase reaction, activating hydrogencarbonate by forming carboxy phosphate which reacts with ammonia to form carbamoyl phosphate. This Paenarthrobacter aurescens (strain TC1) protein is Carbamoyl phosphate synthase large chain.